We begin with the raw amino-acid sequence, 435 residues long: MAAHLLPICALFLTLLDMAQGFRGPLLPNRPFTTVWNANTQWCLERHGVDVDVSVFDVVANPGQTFRGPDMTIFYSSQLGTYPYYTPTGEPVFGGLPQNASLIAHLARTFQDILAAIPAPDFSGLAVIDWEAWRPRWAFNWDTKDIYRQRSRALVQAQHPDWPAPQVEAVAQDQFQGAARAWMAGTLQLGRALRPRGLWGFYGFPDCYNYDFLSPNYTGQCPSGIRAQNDQLGWLWGQSRALYPSIYMPAVLEGTGKSQMYVQHRVAEAFRVAVAAGDPNLPVLPYVQIFYDTTNHFLPLDELEHSLGESAAQGAAGVVLWVSWENTRTKESCQAIKEYMDTTLGPFILNVTSGALLCSQALCSGHGRCVRRTSHPKALLLLNPASFSIQLTPGGGPLSLRGALSLEDQAQMAVEFKCRCYPGWQAPWCERKSMW.

Positions 1–21 (MAAHLLPICALFLTLLDMAQG) are cleaved as a signal peptide. 2 disulfides stabilise this stretch: Cys43–Cys333 and Cys207–Cys221. Asn99 carries an N-linked (GlcNAc...) asparagine glycan. Glu131 (proton donor) is an active-site residue. N-linked (GlcNAc...) asparagine glycans are attached at residues Asn216 and Asn350. Residues 354–430 (GALLCSQALC…YPGWQAPWCE (77 aa)) form the EGF-like domain. 3 cysteine pairs are disulfide-bonded: Cys358–Cys369, Cys363–Cys418, and Cys420–Cys429.

Belongs to the glycosyl hydrolase 56 family. In terms of tissue distribution, highly expressed in the liver, kidney and heart. Weakly expressed in lung, placenta and skeletal muscle. No expression detected in adult brain. Isoform 1 is expressed only in bladder and prostate cancer cells, G2/G3 bladder tumor tissues and lymph node specimens showing tumor invasive tumors cells. Isoform 3, isoform 4, isoform 5 and isoform 6 are expressed in normal bladder and bladder tumor tissues.

The protein localises to the secreted. The protein resides in the lysosome. The catalysed reaction is Random hydrolysis of (1-&gt;4)-linkages between N-acetyl-beta-D-glucosamine and D-glucuronate residues in hyaluronate.. In terms of biological role, may have a role in promoting tumor progression. May block the TGFB1-enhanced cell growth. The sequence is that of Hyaluronidase-1 (HYAL1) from Homo sapiens (Human).